We begin with the raw amino-acid sequence, 173 residues long: Coordinator of PRMT5 and differentiation stimulator (173 aa).

Position 1 is an N-acetylmethionine (M1). The interval 1 to 70 (MDPQAATGRG…EGPSSEEEGF (70 aa)) is disordered. 2 positions are modified to phosphoserine: S64 and S65.

As to quaternary structure, interacts with PRMT5. Interacts with histone H4; specifically interacts with the N-terminus of histone H4 but not with histone H3. Interacts with CBFB. Found in a complex with PRMT5, RUNX1 and CBFB.

The protein resides in the nucleus. Functionally, histone-binding protein required for histone H4 methyltransferase activity of PRMT5. Specifically required for histone H4 'Arg-3' methylation mediated by PRMT5, but not histone H3 'Arg-8' methylation, suggesting that it modulates the substrate specificity of PRMT5. Specifically interacts with the N-terminus of histone H4 but not with histone H3, suggesting that it acts by promoting the association between histone H4 and PRMT5. Involved in CCNE1 promoter repression. Plays a role in muscle cell differentiation by modulating the recruitment of PRMT5 to the promoter of genes involved in the coordination between cell cycle exit and muscle differentiation. In Mus musculus (Mouse), this protein is Coordinator of PRMT5 and differentiation stimulator (Coprs).